The primary structure comprises 260 residues: Fibronectin type III domain-containing protein 5 (260 aa).

The disordered stretch occupies residues 1-56 (MQAARGGAGRPERPGRPGRGPERERERPPGAGAASPCAAPGLPAGGATIHPGSPSA). The segment covering 10-28 (RPERPGRPGRGPERERERP) has biased composition (basic and acidic residues). Positions 29–56 (PGAGAASPCAAPGLPAGGATIHPGSPSA) are enriched in low complexity. Positions 84–175 (APVNVTVRHL…EPVLFKTPRE (92 aa)) constitute a Fibronectin type-III domain. 2 N-linked (GlcNAc...) asparagine glycosylation sites follow: Asn-87 and Asn-132. A helical membrane pass occupies residues 201–221 (GEVLIIVVVLFMWAGVIALFC). The segment covering 230 to 241 (NEPNNNKEKTKS) has biased composition (basic and acidic residues). Residues 230–260 (NEPNNNKEKTKSASETSTPEHQGGGLLRSKI) form a disordered region. Positions 251–260 (QGGGLLRSKI) are enriched in gly residues. Residues 258-260 (SKI) carry the Microbody targeting signal motif.

Dimer; may exist in other oligomeric forms. The extracellular domain is cleaved and released from the cell membrane. Post-translationally, N-Glycosylated. In terms of tissue distribution, widely expressed, with highest levels in heart. Very low expression, if any, in colon, pancreas and spleen.

It localises to the cell membrane. The protein localises to the peroxisome membrane. The protein resides in the secreted. Mediates beneficial effects of muscular exercise. Induces browning of white adipose tissue by stimulating UCP1 expression, at least in part, via the nuclear receptor PPARA. The polypeptide is Fibronectin type III domain-containing protein 5 (FNDC5) (Homo sapiens (Human)).